A 190-amino-acid polypeptide reads, in one-letter code: MLTFWLAVATLSALALVAGAVLGFAARRFQVKTDPVAERIDALLPQSQCAQCGYPGCRPYAEAVAGGAPINKCVPGGEAVMLKIAAQLSVDPQPMDGEASSRPESRVAWIDEGNCIGCTKCIQACPVDAIVGATRAVHTVVSDLCTGCDLCVAPCPTNCIEMRPLAITPTSWKWDLRTIPITVIQQEQHV.

The segment at methionine 1–alanine 26 is hydrophobic. In terms of domain architecture, 4Fe-4S spans lysine 32–valine 90. Positions 49, 52, 57, 73, 115, 118, 121, 125, 145, 148, 151, and 155 each coordinate [4Fe-4S] cluster. 2 4Fe-4S ferredoxin-type domains span residues arginine 106 to arginine 135 and alanine 136 to leucine 165.

The protein belongs to the 4Fe4S bacterial-type ferredoxin family. RnfB subfamily. As to quaternary structure, the complex is composed of six subunits: RnfA, RnfB, RnfC, RnfD, RnfE and RnfG. The cofactor is [4Fe-4S] cluster.

It localises to the cell inner membrane. In terms of biological role, part of a membrane-bound complex that couples electron transfer with translocation of ions across the membrane. The chain is Ion-translocating oxidoreductase complex subunit B from Sodalis glossinidius (strain morsitans).